The primary structure comprises 143 residues: Small ribosomal subunit protein uS9 (143 aa).

An N-acetylserine modification is found at Ser-2. The tract at residues 123–143 (MPEPKKFGGKGARSRYQKSYR) is disordered. Positions 134 to 143 (ARSRYQKSYR) are enriched in basic residues.

Belongs to the universal ribosomal protein uS9 family.

The chain is Small ribosomal subunit protein uS9 (RPS16) from Maudiozyma exigua (Yeast).